Here is a 509-residue protein sequence, read N- to C-terminus: ATP synthase subunit alpha (509 aa).

Position 169-176 (169-176) interacts with ATP; that stretch reads GDRQTGKT.

It belongs to the ATPase alpha/beta chains family. F-type ATPases have 2 components, CF(1) - the catalytic core - and CF(0) - the membrane proton channel. CF(1) has five subunits: alpha(3), beta(3), gamma(1), delta(1), epsilon(1). CF(0) has three main subunits: a(1), b(2) and c(9-12). The alpha and beta chains form an alternating ring which encloses part of the gamma chain. CF(1) is attached to CF(0) by a central stalk formed by the gamma and epsilon chains, while a peripheral stalk is formed by the delta and b chains.

It is found in the cell inner membrane. It catalyses the reaction ATP + H2O + 4 H(+)(in) = ADP + phosphate + 5 H(+)(out). Produces ATP from ADP in the presence of a proton gradient across the membrane. The alpha chain is a regulatory subunit. The chain is ATP synthase subunit alpha from Rhizobium etli (strain ATCC 51251 / DSM 11541 / JCM 21823 / NBRC 15573 / CFN 42).